A 1238-amino-acid chain; its full sequence is Protein translocase subunit SecA 1 (1238 aa).

ATP contacts are provided by residues Gln-107, 125–129 (GEGKT), and Asp-570. Residues 1194 to 1220 (AAGSEGRAEGSVDTVRVEEPRIGRNAP) are disordered. The segment covering 1199–1215 (GRAEGSVDTVRVEEPRI) has biased composition (basic and acidic residues). Positions 1221, 1223, 1232, and 1233 each coordinate Zn(2+).

This sequence belongs to the SecA family. As to quaternary structure, monomer and homodimer. Part of the essential Sec protein translocation apparatus which comprises SecA, SecYEG and auxiliary proteins SecDF. Other proteins may also be involved. Zn(2+) serves as cofactor.

It is found in the cell inner membrane. The protein localises to the cytoplasm. The catalysed reaction is ATP + H2O + cellular proteinSide 1 = ADP + phosphate + cellular proteinSide 2.. In terms of biological role, part of the Sec protein translocase complex. Interacts with the SecYEG preprotein conducting channel. Has a central role in coupling the hydrolysis of ATP to the transfer of proteins into and across the cell membrane, serving as an ATP-driven molecular motor driving the stepwise translocation of polypeptide chains across the membrane. This Rhodopirellula baltica (strain DSM 10527 / NCIMB 13988 / SH1) protein is Protein translocase subunit SecA 1.